The primary structure comprises 98 residues: Homeobox protein SMOX-4 (98 aa).

Residues S37–N96 constitute a DNA-binding region (homeobox).

It is found in the nucleus. This is Homeobox protein SMOX-4 (SMOX-4) from Schistosoma mansoni (Blood fluke).